A 250-amino-acid chain; its full sequence is Ubiquinone/menaquinone biosynthesis C-methyltransferase UbiE (250 aa).

Residues T73, D94, 122–123 (NA), and S139 each bind S-adenosyl-L-methionine.

This sequence belongs to the class I-like SAM-binding methyltransferase superfamily. MenG/UbiE family.

It catalyses the reaction a 2-demethylmenaquinol + S-adenosyl-L-methionine = a menaquinol + S-adenosyl-L-homocysteine + H(+). The catalysed reaction is a 2-methoxy-6-(all-trans-polyprenyl)benzene-1,4-diol + S-adenosyl-L-methionine = a 5-methoxy-2-methyl-3-(all-trans-polyprenyl)benzene-1,4-diol + S-adenosyl-L-homocysteine + H(+). The protein operates within quinol/quinone metabolism; menaquinone biosynthesis; menaquinol from 1,4-dihydroxy-2-naphthoate: step 2/2. It participates in cofactor biosynthesis; ubiquinone biosynthesis. Methyltransferase required for the conversion of demethylmenaquinol (DMKH2) to menaquinol (MKH2) and the conversion of 2-polyprenyl-6-methoxy-1,4-benzoquinol (DDMQH2) to 2-polyprenyl-3-methyl-6-methoxy-1,4-benzoquinol (DMQH2). The protein is Ubiquinone/menaquinone biosynthesis C-methyltransferase UbiE of Francisella philomiragia subsp. philomiragia (strain ATCC 25017 / CCUG 19701 / FSC 153 / O#319-036).